The primary structure comprises 745 residues: Fatty acid oxidation complex subunit alpha (745 aa).

The enoyl-CoA hydratase stretch occupies residues 47-209; that stretch reads VNTLKAKFAE…KMGLVDDVVP (163 aa). Positions 325–745 are 3-hydroxyacyl-CoA dehydrogenase; the sequence is RAIHRVGVLG…LDEAAITAHN (421 aa).

This sequence in the N-terminal section; belongs to the enoyl-CoA hydratase/isomerase family. The protein in the central section; belongs to the 3-hydroxyacyl-CoA dehydrogenase family. As to quaternary structure, heterotetramer of two alpha chains (FadJ) and two beta chains (FadI).

Its subcellular location is the cytoplasm. It catalyses the reaction a (3S)-3-hydroxyacyl-CoA = a (2E)-enoyl-CoA + H2O. It carries out the reaction a 4-saturated-(3S)-3-hydroxyacyl-CoA = a (3E)-enoyl-CoA + H2O. The catalysed reaction is a (3S)-3-hydroxyacyl-CoA + NAD(+) = a 3-oxoacyl-CoA + NADH + H(+). The enzyme catalyses (3S)-3-hydroxybutanoyl-CoA = (3R)-3-hydroxybutanoyl-CoA. It functions in the pathway lipid metabolism; fatty acid beta-oxidation. Its function is as follows. Catalyzes the formation of a hydroxyacyl-CoA by addition of water on enoyl-CoA. Also exhibits 3-hydroxyacyl-CoA epimerase and 3-hydroxyacyl-CoA dehydrogenase activities. The sequence is that of Fatty acid oxidation complex subunit alpha from Yersinia enterocolitica serotype O:8 / biotype 1B (strain NCTC 13174 / 8081).